Here is a 357-residue protein sequence, read N- to C-terminus: Membrane-bound lytic murein transglycosylase C (357 aa).

The signal sequence occupies residues 1–15 (MKKYLLLALLPFLYA). The N-palmitoyl cysteine moiety is linked to residue cysteine 16. Cysteine 16 carries the S-diacylglycerol cysteine lipid modification.

This sequence belongs to the transglycosylase Slt family.

Its subcellular location is the cell outer membrane. It carries out the reaction Exolytic cleavage of the (1-&gt;4)-beta-glycosidic linkage between N-acetylmuramic acid (MurNAc) and N-acetylglucosamine (GlcNAc) residues in peptidoglycan, from either the reducing or the non-reducing ends of the peptidoglycan chains, with concomitant formation of a 1,6-anhydrobond in the MurNAc residue.. Its function is as follows. Murein-degrading enzyme. May play a role in recycling of muropeptides during cell elongation and/or cell division. This is Membrane-bound lytic murein transglycosylase C from Haemophilus influenzae (strain ATCC 51907 / DSM 11121 / KW20 / Rd).